The following is a 433-amino-acid chain: 5-methylthioadenosine/S-adenosylhomocysteine deaminase (433 aa).

His-67 and His-69 together coordinate Zn(2+). The substrate site is built by Glu-96, Arg-148, Arg-158, and His-186. His-213 contributes to the Zn(2+) binding site. Positions 216 and 301 each coordinate substrate. Asp-301 is a Zn(2+) binding site.

The protein belongs to the metallo-dependent hydrolases superfamily. MTA/SAH deaminase family. Requires Zn(2+) as cofactor.

The enzyme catalyses S-adenosyl-L-homocysteine + H2O + H(+) = S-inosyl-L-homocysteine + NH4(+). It carries out the reaction S-methyl-5'-thioadenosine + H2O + H(+) = S-methyl-5'-thioinosine + NH4(+). Functionally, catalyzes the deamination of 5-methylthioadenosine and S-adenosyl-L-homocysteine into 5-methylthioinosine and S-inosyl-L-homocysteine, respectively. Is also able to deaminate adenosine. The sequence is that of 5-methylthioadenosine/S-adenosylhomocysteine deaminase from Pelotomaculum thermopropionicum (strain DSM 13744 / JCM 10971 / SI).